Here is a 222-residue protein sequence, read N- to C-terminus: Myosin regulatory light chain 2 (222 aa).

Residues 1–65 (MADEKKKVKK…RGSRKSKRAG (65 aa)) are disordered. Ala-2 carries the post-translational modification N-acetylalanine. Positions 19 to 53 (TSETASEAASEAATPAPAATPAPAASATGSKRASG) are enriched in low complexity. A phosphoserine mark is found at Ser-66 and Ser-67. EF-hand domains are found at residues 75-110 (KQIAEFKEAFQLMDADKDGIIGKNDLRAAFDSVGKI), 147-180 (DEDEVVIAAFKTFDNDGLIDGDKFREMLMNFGDK), and 181-216 (FTMKEVDDAYDQMVIDDKNQIDTAALIEMLTGKGEE). Asp-88, Asp-90, Asp-92, and Asp-99 together coordinate Ca(2+).

Myosin is a hexamer of 2 heavy chains and 4 light chains.

In Drosophila melanogaster (Fruit fly), this protein is Myosin regulatory light chain 2 (Mlc2).